The chain runs to 431 residues: Evolutionarily conserved signaling intermediate in Toll pathway, mitochondrial (431 aa).

A mitochondrion-targeting transit peptide spans Met1–His48. Lys372 participates in a covalent cross-link: Glycyl lysine isopeptide (Lys-Gly) (interchain with G-Cter in ubiquitin). The tract at residues Leu400–Ser431 is disordered.

Belongs to the ECSIT family. Interacts with MAP3K1, SMAD4 and TRAF6. Interacts with SMAD1 only after BMP4-treatment. Part of the mitochondrial complex I assembly/MCIA complex that comprises at least the core subunits TMEM126B, NDUFAF1, ECSIT and ACAD9 and complement subunits such as COA1 and TMEM186. Interacts with NDUFAF1. Interacts with ACAD9. Interacts with TRIM59. Interacts with TMEM70 and TMEM242. Interacts (when ubiquitinated) with NF-kappa-B subunits RELA and NFKB1. Interacts with RIGI, IFIT1 and MAVS; these interactions promote RLR-mediated type I IFN induction. Interacts with SQSTM1; this interaction inhibits TLR4 signaling via functional regulation of the TRAF6-ECSIT complex. Interacts with cereblon/CRBN; this interaction inhibits the ubiquitination of ECSIT. Post-translationally, ubiquitinated on Lys-372; leading to translocation in the nucleus together with RELA and NFKB1 and expression of NF-kappa-B-dependent genes.

The protein localises to the cytoplasm. It is found in the nucleus. Its subcellular location is the mitochondrion. Adapter protein that plays a role in different signaling pathways including TLRs and IL-1 pathways or innate antiviral induction signaling. Plays a role in the activation of NF-kappa-B by forming a signal complex with TRAF6 and TAK1/MAP3K7 to activate TAK1/MAP3K7 leading to activation of IKKs. Once ubiquitinated, interacts with the dissociated RELA and NFKB1 proteins and translocates to the nucleus where it induces NF-kappa-B-dependent gene expression. Plays a role in innate antiviral immune response by bridging the pattern recognition receptors RIGI and MDA5/IFIT1 to the MAVS complex at the mitochondrion. Promotes proteolytic activation of MAP3K1. Involved in the BMP signaling pathway. Required for normal embryonic development. In terms of biological role, as part of the MCIA complex, involved in the assembly of the mitochondrial complex I. The protein is Evolutionarily conserved signaling intermediate in Toll pathway, mitochondrial of Homo sapiens (Human).